Consider the following 280-residue polypeptide: Urease accessory protein UreD (280 aa).

It belongs to the UreD family. As to quaternary structure, ureD, UreF and UreG form a complex that acts as a GTP-hydrolysis-dependent molecular chaperone, activating the urease apoprotein by helping to assemble the nickel containing metallocenter of UreC. The UreE protein probably delivers the nickel.

The protein localises to the cytoplasm. Required for maturation of urease via the functional incorporation of the urease nickel metallocenter. The sequence is that of Urease accessory protein UreD from Pseudomonas aeruginosa (strain UCBPP-PA14).